We begin with the raw amino-acid sequence, 416 residues long: Glutamyl-tRNA reductase (416 aa).

Substrate-binding positions include 50–53, S109, 114–116, and Q120; these read TCNR and EPQ. Catalysis depends on C51, which acts as the Nucleophile. 189-194 lines the NADP(+) pocket; sequence GAGEMI.

It belongs to the glutamyl-tRNA reductase family. As to quaternary structure, homodimer.

The enzyme catalyses (S)-4-amino-5-oxopentanoate + tRNA(Glu) + NADP(+) = L-glutamyl-tRNA(Glu) + NADPH + H(+). Its pathway is porphyrin-containing compound metabolism; protoporphyrin-IX biosynthesis; 5-aminolevulinate from L-glutamyl-tRNA(Glu): step 1/2. Catalyzes the NADPH-dependent reduction of glutamyl-tRNA(Glu) to glutamate 1-semialdehyde (GSA). This is Glutamyl-tRNA reductase from Ruthia magnifica subsp. Calyptogena magnifica.